A 515-amino-acid polypeptide reads, in one-letter code: Anterior pharynx in excess protein 1 (515 aa).

The first 26 residues, 1-26 (MTNFSSLLTTIFLCIISSATGSGTIE), serve as a signal peptide directing secretion. Residues 27-392 (LLISSPQTVL…QASDELQLRL (366 aa)) lie on the Extracellular side of the membrane. A glycan (N-linked (GlcNAc...) asparagine) is linked at Asn-123. Residues 130–172 (NLCSSNYHGKRCNRYCIANAKLHWECSTHGVRRCSAGWSGEDC) form the DSL domain. 14 disulfides stabilise this stretch: Cys-132–Cys-141, Cys-145–Cys-155, Cys-163–Cys-172, Cys-177–Cys-187, Cys-181–Cys-193, Cys-195–Cys-204, Cys-213–Cys-218, Cys-228–Cys-237, Cys-244–Cys-256, Cys-250–Cys-268, Cys-270–Cys-279, Cys-288–Cys-300, Cys-294–Cys-310, and Cys-312–Cys-321. EGF-like domains lie at 173–205 (SNPI…TRCE), 203–238 (RCEQ…DRCD), 240–280 (DIKI…SQCK), and 284–322 (SKVR…KFCE). Asn-200 carries an N-linked (GlcNAc...) asparagine glycan. In terms of domain architecture, EGF-like 5; incomplete spans 325–349 (NHGDCSAMRCSAGETCQISGDFAIC). Residues 393–413 (IAAICVLFSVCVIGLALVSFF) traverse the membrane as a helical segment. The Cytoplasmic portion of the chain corresponds to 414 to 515 (FYMHSFSKWK…AADDESSFRV (102 aa)). Disordered regions lie at residues 427-452 (SQQA…SGTG) and 466-494 (RGNA…PPAY). The segment covering 431–452 (GGSTILPTTTSIPMSTTSSGTG) has biased composition (low complexity).

Its subcellular location is the cell membrane. It localises to the nucleus. It is found in the cytoplasm. Its function is as follows. Probable ligand for lin-12/Notch and glp-1/Notch receptors and involved in the mediation of Notch signaling. Involved in the lin-12/Notch pathway signaling of cell fate in vulval precursor cells (VPCs), acting redundantly with dsl-1 and lag-2. Contributes to the establishment of the dorsal-ventral axis in early embryos. Involved in the specification of the blastomere cell ABp fate, probably acting as a signal from the P2 blastomere to the glp-1/Notch receptor on ABp and ABa. Probably acts as a signal, from the secondary vulval epithelial cells and the vulval muscle type 1 (vm1) cells, to activate the lin-12/Notch pathway in type 2 vulval muscle (vm2) cells, contributing to formation of the postsynaptic muscle plasma membrane extensions, known as muscle arms. Required for oocyte growth control, acting redundantly with lag-2, perhaps signaling via the glp-1/Notch pathway. Plays a somatic role in ovulation during adulthood, perhaps via lin-12/Notch signaling. Involved in establishing left-right asymmetry during intestinal organogenesis. The protein is Anterior pharynx in excess protein 1 (apx-1) of Caenorhabditis elegans.